Reading from the N-terminus, the 338-residue chain is MEMO1 family protein MHO1 (338 aa).

Belongs to the MEMO1 family.

It localises to the cytoplasm. The protein resides in the nucleus. Its function is as follows. Plays a role in haploid invasive growth under conditions of nutrient insufficiency, suggesting that the function of the MEMO1 family in cell motility/invasion is conserved across species. This is MEMO1 family protein MHO1 from Saccharomyces cerevisiae (strain ATCC 204508 / S288c) (Baker's yeast).